Consider the following 162-residue polypeptide: Phosphopantetheine adenylyltransferase (162 aa).

Ser-11 provides a ligand contact to substrate. ATP contacts are provided by residues 11–12 and His-19; that span reads SF. Positions 43, 76, and 90 each coordinate substrate. Residues 91–93, Glu-101, and 126–132 each bind ATP; these read GLR and LKFVSSS.

It belongs to the bacterial CoaD family. As to quaternary structure, homohexamer. Mg(2+) is required as a cofactor.

It localises to the cytoplasm. It catalyses the reaction (R)-4'-phosphopantetheine + ATP + H(+) = 3'-dephospho-CoA + diphosphate. It functions in the pathway cofactor biosynthesis; coenzyme A biosynthesis; CoA from (R)-pantothenate: step 4/5. In terms of biological role, reversibly transfers an adenylyl group from ATP to 4'-phosphopantetheine, yielding dephospho-CoA (dPCoA) and pyrophosphate. The chain is Phosphopantetheine adenylyltransferase from Streptococcus suis (strain 05ZYH33).